An 87-amino-acid polypeptide reads, in one-letter code: MANHKSAEKRARQTIKRTERNRFYRTRLKNITKAVREAAANNDKEAAANALKIANKSIHAMVSRGFLKKQTASRRVSRLALLVNKIA.

The interval 1-20 (MANHKSAEKRARQTIKRTER) is disordered.

The protein belongs to the bacterial ribosomal protein bS20 family.

Its function is as follows. Binds directly to 16S ribosomal RNA. The polypeptide is Small ribosomal subunit protein bS20 (Campylobacter lari (strain RM2100 / D67 / ATCC BAA-1060)).